The chain runs to 78 residues: Large ribosomal subunit protein bL28 (78 aa).

Positions 1–20 (MSRVCQVTGKGPVTGNNISH) are disordered.

It belongs to the bacterial ribosomal protein bL28 family.

The sequence is that of Large ribosomal subunit protein bL28 from Pseudomonas putida (strain W619).